The chain runs to 290 residues: Sodium/potassium-transporting ATPase subunit beta-2 (290 aa).

The Cytoplasmic portion of the chain corresponds to 1 to 39 (MVIQKEKKSCGQVVEEWKEFVWNPRTHQFMGRTGTSWAF). Residues 40–67 (ILLFYLVFYGFLTAMFSLTMWVMLQTVS) form a helical; Signal-anchor for type II membrane protein membrane-spanning segment. Residues 68-290 (DHTPKYQDRL…VAFKLRINKT (223 aa)) are Extracellular-facing. Residues N96 and N118 are each glycosylated (N-linked (GlcNAc...) asparagine). A disulfide bond links C129 and C150. Residue N153 is glycosylated (N-linked (GlcNAc...) asparagine). C160 and C177 are oxidised to a cystine. N193, N197, N220, and N238 each carry an N-linked (GlcNAc...) asparagine glycan. The immunoglobulin-like stretch occupies residues 193 to 290 (NQSMNVTCVG…VAFKLRINKT (98 aa)). C200 and C261 are joined by a disulfide.

It belongs to the X(+)/potassium ATPases subunit beta family. In terms of assembly, the sodium/potassium-transporting ATPase is composed of a catalytic alpha subunit, an auxiliary non-catalytic beta subunit and an additional regulatory subunit. Interacts with isoform 2 of BSG.

It is found in the cell membrane. Functionally, this is the non-catalytic component of the active enzyme, which catalyzes the hydrolysis of ATP coupled with the exchange of Na(+) and K(+) ions across the plasma membrane. The exact function of the beta-2 subunit is not known. In terms of biological role, mediates cell adhesion of neurons and astrocytes, and promotes neurite outgrowth. This chain is Sodium/potassium-transporting ATPase subunit beta-2 (Atp1b2), found in Mus musculus (Mouse).